Consider the following 254-residue polypeptide: Type III pantothenate kinase (254 aa).

6-13 contributes to the ATP binding site; sequence DVGNTNTV. Substrate is bound by residues Tyr-100 and 107–110; that span reads GADR. The active-site Proton acceptor is the Asp-109. Asp-129 contributes to the K(+) binding site. Thr-132 is a binding site for ATP. Thr-184 contributes to the substrate binding site.

It belongs to the type III pantothenate kinase family. In terms of assembly, homodimer. NH4(+) is required as a cofactor. The cofactor is K(+).

The protein resides in the cytoplasm. The enzyme catalyses (R)-pantothenate + ATP = (R)-4'-phosphopantothenate + ADP + H(+). It participates in cofactor biosynthesis; coenzyme A biosynthesis; CoA from (R)-pantothenate: step 1/5. In terms of biological role, catalyzes the phosphorylation of pantothenate (Pan), the first step in CoA biosynthesis. The chain is Type III pantothenate kinase from Anaeromyxobacter sp. (strain Fw109-5).